A 331-amino-acid polypeptide reads, in one-letter code: Phosphoribosylformylglycinamidine cyclo-ligase (331 aa).

It belongs to the AIR synthase family.

It localises to the cytoplasm. The enzyme catalyses 2-formamido-N(1)-(5-O-phospho-beta-D-ribosyl)acetamidine + ATP = 5-amino-1-(5-phospho-beta-D-ribosyl)imidazole + ADP + phosphate + H(+). It participates in purine metabolism; IMP biosynthesis via de novo pathway; 5-amino-1-(5-phospho-D-ribosyl)imidazole from N(2)-formyl-N(1)-(5-phospho-D-ribosyl)glycinamide: step 2/2. This is Phosphoribosylformylglycinamidine cyclo-ligase from Clostridium novyi (strain NT).